Reading from the N-terminus, the 1463-residue chain is Clustered mitochondria protein homolog (1463 aa).

Residues 1–79 (MAKNKKQNGK…ETEQQQQQQE (79 aa)) form a disordered region. Over residues 10-22 (KAKTPPVVAAAAG) the composition is skewed to low complexity. Residues 374–616 (RAEDTFSSKL…RTFPPDVNFL (243 aa)) form the Clu domain. Disordered regions lie at residues 684–753 (AQKT…SEDA), 942–988 (GDGQ…SVPS), and 1387–1463 (QKEA…RRKS). Residues 692-702 (KQAAIEAAAPA) show a composition bias toward low complexity. Residues 703–731 (EGDKTPAKDAKDGKEAGKDANDGKEEGST) show a composition bias toward basic and acidic residues. Positions 955-964 (GGKKQNKQSK) are enriched in basic residues. Positions 965–980 (RGGGGGGGKGAAGGGR) are enriched in gly residues. Over residues 1438–1456 (AEAASHTAGGAAANTAAPA) the composition is skewed to low complexity.

The protein belongs to the CLU family.

The protein localises to the cytoplasm. Functionally, mRNA-binding protein involved in proper cytoplasmic distribution of mitochondria. This Anopheles gambiae (African malaria mosquito) protein is Clustered mitochondria protein homolog.